The chain runs to 519 residues: Ribose import ATP-binding protein RbsA 2 (519 aa).

ABC transporter domains follow at residues 15–252 (FRLR…VGRP) and 262–506 (HEPG…TGVR). 47–54 (GENGAGKS) lines the ATP pocket.

This sequence belongs to the ABC transporter superfamily. Ribose importer (TC 3.A.1.2.1) family. The complex is composed of an ATP-binding protein (RbsA), two transmembrane proteins (RbsC) and a solute-binding protein (RbsB).

The protein resides in the cell membrane. It catalyses the reaction D-ribose(out) + ATP + H2O = D-ribose(in) + ADP + phosphate + H(+). In terms of biological role, part of the ABC transporter complex RbsABC involved in ribose import. Responsible for energy coupling to the transport system. The protein is Ribose import ATP-binding protein RbsA 2 of Rubrobacter xylanophilus (strain DSM 9941 / JCM 11954 / NBRC 16129 / PRD-1).